Reading from the N-terminus, the 265-residue chain is Urease accessory protein UreH (265 aa).

Belongs to the UreD family. In terms of assembly, ureH, UreF and UreG form a complex that acts as a GTP-hydrolysis-dependent molecular chaperone, activating the urease apoprotein by helping to assemble the nickel containing metallocenter of UreC. The UreE protein probably delivers the nickel.

The protein localises to the cytoplasm. Required for maturation of urease via the functional incorporation of the urease nickel metallocenter. The protein is Urease accessory protein UreH of Helicobacter pylori (strain J99 / ATCC 700824) (Campylobacter pylori J99).